A 286-amino-acid polypeptide reads, in one-letter code: Ribosome-inactivating protein momordin II (286 aa).

An N-terminal signal peptide occupies residues 1–23; it reads MVKCLLLSFLIIAIFIGVPTAKG. E181 is a catalytic residue.

Belongs to the ribosome-inactivating protein family. Type 1 RIP subfamily.

It catalyses the reaction Endohydrolysis of the N-glycosidic bond at one specific adenosine on the 28S rRNA.. The chain is Ribosome-inactivating protein momordin II from Momordica balsamina (Bitter gourd).